We begin with the raw amino-acid sequence, 608 residues long: Glutamine--fructose-6-phosphate aminotransferase [isomerizing] (608 aa).

The active-site Nucleophile; for GATase activity is cysteine 2. A Glutamine amidotransferase type-2 domain is found at 2–217 (CGIVGYIGKK…DNEFVLMTKD (216 aa)). 2 SIS domains span residues 284-424 (ISKE…EKGT) and 453-598 (IMKK…VDKP). The active-site For Fru-6P isomerization activity is the lysine 603.

As to quaternary structure, homodimer.

The protein resides in the cytoplasm. The enzyme catalyses D-fructose 6-phosphate + L-glutamine = D-glucosamine 6-phosphate + L-glutamate. Its function is as follows. Catalyzes the first step in hexosamine metabolism, converting fructose-6P into glucosamine-6P using glutamine as a nitrogen source. The chain is Glutamine--fructose-6-phosphate aminotransferase [isomerizing] from Clostridium tetani (strain Massachusetts / E88).